The following is a 350-amino-acid chain: Neurogenic differentiation factor 1 (350 aa).

Positions 1-91 (MTKSYSEESM…KKKKMTKARM (91 aa)) are disordered. Residues 7–18 (EESMMLESQSSS) are compositionally biased toward low complexity. Positions 22 to 38 (DKCHSSSQDERDVDKTS) are enriched in basic and acidic residues. Acidic residues predominate over residues 44–72 (DMEDDDDAGLNRLEDEDDEEEEEEEEDGD). Basic residues predominate over residues 76–91 (PKRRGPKKKKMTKARM). A Nuclear localization signal motif is present at residues 82–88 (KKKKMTK). The region spanning 96 to 148 (MRRMKANARERNRMHGLNDALESLRKVVPCYSKTQKLSKIETLRLAKNYIWAL) is the bHLH domain.

As to quaternary structure, efficient DNA binding requires dimerization with another bHLH protein. In terms of tissue distribution, in the embryo, expressed broadly in a subset of primary neurons in the brain and spinal cord. At 28 hours post-fertilization (hpf), regions of expression include telencephalon, olfactory placode, epiphysis, cranial ganglia, acoustic ganglia, Rohon-Beard mechano-sensory neurons and motoneurons. In 2 day postembryonic brain, expressed in many brain regions but absent from subpallium, the ventral preoptic region, ventral thalamus and hypothalamus; sites of expression extend laterally from the ventricular proliferative regions and correspond to freshly determined cell populations. In adult, expressed in all tissues examined with highest levels in brain.

It is found in the cytoplasm. Its subcellular location is the nucleus. Its function is as follows. May act as a transcriptional activator. Differentiation factor required for neurogenesis. Acts as an upstream activator of isl1. This is Neurogenic differentiation factor 1 from Danio rerio (Zebrafish).